The following is a 72-amino-acid chain: Translation initiation factor IF-1 (72 aa).

Residues 1-72 (MAKEDTLEFP…TKGRINYRFK (72 aa)) enclose the S1-like domain.

The protein belongs to the IF-1 family. Component of the 30S ribosomal translation pre-initiation complex which assembles on the 30S ribosome in the order IF-2 and IF-3, IF-1 and N-formylmethionyl-tRNA(fMet); mRNA recruitment can occur at any time during PIC assembly.

The protein resides in the cytoplasm. Its function is as follows. One of the essential components for the initiation of protein synthesis. Stabilizes the binding of IF-2 and IF-3 on the 30S subunit to which N-formylmethionyl-tRNA(fMet) subsequently binds. Helps modulate mRNA selection, yielding the 30S pre-initiation complex (PIC). Upon addition of the 50S ribosomal subunit IF-1, IF-2 and IF-3 are released leaving the mature 70S translation initiation complex. The chain is Translation initiation factor IF-1 from Ruegeria sp. (strain TM1040) (Silicibacter sp.).